Reading from the N-terminus, the 284-residue chain is 4-diphosphocytidyl-2-C-methyl-D-erythritol kinase (284 aa).

Residue K22 is part of the active site. An ATP-binding site is contributed by 104 to 114; the sequence is PVGAGLGGASS. D146 is a catalytic residue.

The protein belongs to the GHMP kinase family. IspE subfamily.

The catalysed reaction is 4-CDP-2-C-methyl-D-erythritol + ATP = 4-CDP-2-C-methyl-D-erythritol 2-phosphate + ADP + H(+). It participates in isoprenoid biosynthesis; isopentenyl diphosphate biosynthesis via DXP pathway; isopentenyl diphosphate from 1-deoxy-D-xylulose 5-phosphate: step 3/6. Catalyzes the phosphorylation of the position 2 hydroxy group of 4-diphosphocytidyl-2C-methyl-D-erythritol. The chain is 4-diphosphocytidyl-2-C-methyl-D-erythritol kinase from Hydrogenobaculum sp. (strain Y04AAS1).